The primary structure comprises 535 residues: Bifunctional purine biosynthesis protein PurH (535 aa).

Residues 1–148 (MNNARPIRRA…KNHKDTTIIV (148 aa)) enclose the MGS-like domain.

This sequence belongs to the PurH family.

The enzyme catalyses (6R)-10-formyltetrahydrofolate + 5-amino-1-(5-phospho-beta-D-ribosyl)imidazole-4-carboxamide = 5-formamido-1-(5-phospho-D-ribosyl)imidazole-4-carboxamide + (6S)-5,6,7,8-tetrahydrofolate. It carries out the reaction IMP + H2O = 5-formamido-1-(5-phospho-D-ribosyl)imidazole-4-carboxamide. Its pathway is purine metabolism; IMP biosynthesis via de novo pathway; 5-formamido-1-(5-phospho-D-ribosyl)imidazole-4-carboxamide from 5-amino-1-(5-phospho-D-ribosyl)imidazole-4-carboxamide (10-formyl THF route): step 1/1. It functions in the pathway purine metabolism; IMP biosynthesis via de novo pathway; IMP from 5-formamido-1-(5-phospho-D-ribosyl)imidazole-4-carboxamide: step 1/1. In Shewanella woodyi (strain ATCC 51908 / MS32), this protein is Bifunctional purine biosynthesis protein PurH.